A 375-amino-acid chain; its full sequence is MKFELDTTDGKARRGRLIFDRGVIETPAFMPVGTYGTVKGMTPDEVKATGAQVCLGNTFHLMLRPGTEIIKQHGGLHKFMNWDFPILTDSGGFQVFSLGAMRKITEEGVLFSSPVNGEKIMMTPESSMQVQRDLGSDIVMIFDECTPYPATEKEAKDSMELSLRWAKRSKEGHGDNPSALFGIIQGGMYPELRAQSQAGLEEIGFDGYALGGLSVGEPKNEMINILDHCAYKMPADKPRYLMGVGKPEDLVESVRRGIDMFDCVMPTRNARNGHLFITTGVVKIRNAVHKTDTGPLDPECDCHTCGNYSRAYLHHLDKCNEILGARLNTIHNLRYYQRVMEGLRNAISAGKLDEFVQDFYARRGQDVPELADITN.

Residue D89 is the Proton acceptor of the active site. Residues 89-93 (DSGGF), D143, Q185, and G212 each bind substrate. The segment at 243-249 (GVGKPED) is RNA binding. D262 functions as the Nucleophile in the catalytic mechanism. The segment at 267 to 271 (TRNAR) is RNA binding; important for wobble base 34 recognition. 4 residues coordinate Zn(2+): C300, C302, C305, and H331.

It belongs to the queuine tRNA-ribosyltransferase family. In terms of assembly, homodimer. Within each dimer, one monomer is responsible for RNA recognition and catalysis, while the other monomer binds to the replacement base PreQ1. Requires Zn(2+) as cofactor.

The enzyme catalyses 7-aminomethyl-7-carbaguanine + guanosine(34) in tRNA = 7-aminomethyl-7-carbaguanosine(34) in tRNA + guanine. The protein operates within tRNA modification; tRNA-queuosine biosynthesis. In terms of biological role, catalyzes the base-exchange of a guanine (G) residue with the queuine precursor 7-aminomethyl-7-deazaguanine (PreQ1) at position 34 (anticodon wobble position) in tRNAs with GU(N) anticodons (tRNA-Asp, -Asn, -His and -Tyr). Catalysis occurs through a double-displacement mechanism. The nucleophile active site attacks the C1' of nucleotide 34 to detach the guanine base from the RNA, forming a covalent enzyme-RNA intermediate. The proton acceptor active site deprotonates the incoming PreQ1, allowing a nucleophilic attack on the C1' of the ribose to form the product. After dissociation, two additional enzymatic reactions on the tRNA convert PreQ1 to queuine (Q), resulting in the hypermodified nucleoside queuosine (7-(((4,5-cis-dihydroxy-2-cyclopenten-1-yl)amino)methyl)-7-deazaguanosine). The polypeptide is Queuine tRNA-ribosyltransferase (Pseudoalteromonas translucida (strain TAC 125)).